A 360-amino-acid chain; its full sequence is 3-dehydroquinate synthase (360 aa).

NAD(+) is bound by residues 71–76, 105–109, 129–130, K142, K151, and 169–172; these read DGEQYK, GVIGD, TT, and CLDT. Zn(2+) is bound by residues E184, H247, and H264.

This sequence belongs to the sugar phosphate cyclases superfamily. Dehydroquinate synthase family. Co(2+) is required as a cofactor. Zn(2+) serves as cofactor. Requires NAD(+) as cofactor.

The protein resides in the cytoplasm. It catalyses the reaction 7-phospho-2-dehydro-3-deoxy-D-arabino-heptonate = 3-dehydroquinate + phosphate. Its pathway is metabolic intermediate biosynthesis; chorismate biosynthesis; chorismate from D-erythrose 4-phosphate and phosphoenolpyruvate: step 2/7. In terms of biological role, catalyzes the conversion of 3-deoxy-D-arabino-heptulosonate 7-phosphate (DAHP) to dehydroquinate (DHQ). This chain is 3-dehydroquinate synthase, found in Erwinia tasmaniensis (strain DSM 17950 / CFBP 7177 / CIP 109463 / NCPPB 4357 / Et1/99).